Consider the following 623-residue polypeptide: MSCRQFSSSYLSRSGGGGGGGLGSGGSIRSSYSRFSSSGGGGGGGRFSSSSGYGGGSSRVCGRGGGGSFGYSYGGGSGGGFSASSLGGGFGGGSRGFGGASGGGYSSSGGFGGGFGGGSGGGFGGGYGSGFGGFGGFGGGAGGGDGGILTANEKSTMQELNSRLASYLDKVQALEEANNDLENKIQDWYDKKGPAAIQKNYSPYYNTIDDLKDQIVDLTVGNNKTLLDIDNTRMTLDDFRIKFEMEQNLRQGVDADINGLRQVLDNLTMEKSDLEMQYETLQEELMALKKNHKEEMSQLTGQNSGDVNVEINVAPGKDLTKTLNDMRQEYEQLIAKNRKDIENQYETQITQIEHEVSSSGQEVQSSAKEVTQLRHGVQELEIELQSQLSKKAALEKSLEDTKNRYCGQLQMIQEQISNLEAQITDVRQEIECQNQEYSLLLSIKMRLEKEIETYHNLLEGGQEDFESSGAGKIGLGGRGGSGGSYGRGSRGGSGGSYGGGGSGGGYGGGSGSRGGSGGSYGGGSGSGGGSGGGYGGGSGGGHSGGSGGGHSGGSGGNYGGGSGSGGGSGGGYGGGSGSRGGSGGSHGGGSGFGGESGGSYGGGEEASGSGGGYGGGSGKSSHS.

Low complexity predominate over residues 1-13 (MSCRQFSSSYLSR). Residues 1–25 (MSCRQFSSSYLSRSGGGGGGGLGSG) are disordered. The tract at residues 1–152 (MSCRQFSSSY…GGDGGILTAN (152 aa)) is head. A phosphoserine mark is found at Ser-14 and Ser-57. Positions 14–25 (SGGGGGGGLGSG) are enriched in gly residues. Residues 153–188 (EKSTMQELNSRLASYLDKVQALEEANNDLENKIQDW) form a coil 1A region. An IF rod domain is found at 153-465 (EKSTMQELNS…NLLEGGQEDF (313 aa)). The linker 1 stretch occupies residues 189 to 207 (YDKKGPAAIQKNYSPYYNT). The interval 208–299 (IDDLKDQIVD…KNHKEEMSQL (92 aa)) is coil 1B. The segment at 300-322 (TGQNSGDVNVEINVAPGKDLTKT) is linker 12. The tract at residues 323-461 (LNDMRQEYEQ…ETYHNLLEGG (139 aa)) is coil 2. Disordered stretches follow at residues 462-496 (QEDF…SGGS) and 534-623 (YGGG…SSHS). Positions 462–623 (QEDFESSGAG…GGGSGKSSHS (162 aa)) are tail. The segment covering 471–496 (GKIGLGGRGGSGGSYGRGSRGGSGGS) has biased composition (gly residues).

It belongs to the intermediate filament family. As to quaternary structure, heterotetramer of two type I and two type II keratins. As to expression, expressed in the terminally differentiated epidermis of palms and soles.

Functionally, may serve an important special function either in the mature palmar and plantar skin tissue or in the morphogenetic program of the formation of these tissues. Plays a role in keratin filament assembly. This is Keratin, type I cytoskeletal 9 (KRT9) from Homo sapiens (Human).